The chain runs to 592 residues: Sodium- and chloride-dependent transporter XTRP3 (592 aa).

Residues 1 to 5 (MEKAR) are Cytoplasmic-facing. A helical membrane pass occupies residues 6 to 26 (PLWANSLQFVFACISYAVGLG). The Extracellular segment spans residues 27-42 (NVWRFPYLCQMYGGGS). Residues 43–63 (FLVPYIIMLIVEGMPLLYLEL) form a helical membrane-spanning segment. Residues 64–79 (AVGQRMRQGSIGAWRT) lie on the Cytoplasmic side of the membrane. The helical transmembrane segment at 80–100 (ISPYLSGVGVASVVVSFFLSM) threads the bilayer. Residues 101-165 (YYNVINAWAF…ISPSLQENGG (65 aa)) are Extracellular-facing. Asn131 carries N-linked (GlcNAc...) asparagine glycosylation. The helical transmembrane segment at 166-186 (VQWEPALCLLLAWLVVYLCIL) threads the bilayer. Over 187-194 (RGTESTGK) the chain is Cytoplasmic. Residues 195-215 (VVYFTASLPYCVLIIYLIRGL) traverse the membrane as a helical segment. The Extracellular portion of the chain corresponds to 216 to 241 (TLHGATNGLMYMFTPKIEQLANPKAW). A helical membrane pass occupies residues 242 to 262 (INAATQIFFSLGLGFGSLIAF). The Cytoplasmic portion of the chain corresponds to 263-276 (ASYNEPSNNCQKHA). Residues 277–297 (IIVSLINSFTSIFASIVTFSI) traverse the membrane as a helical segment. Topologically, residues 298–389 (YGFKATFNYE…EAIKNMEVSQ (92 aa)) are extracellular. An N-linked (GlcNAc...) asparagine glycan is attached at Asn357. Residues 390–410 (LWSVLYFFMLLMLGIGSMLGN) form a helical membrane-spanning segment. The Cytoplasmic portion of the chain corresponds to 411 to 431 (TAAILTPLTDSKIISSHLPKE). Residues 432-452 (AISGLVCLVNCAIGMVFTMEA) form a helical membrane-spanning segment. The Extracellular portion of the chain corresponds to 453-465 (GNYWFDIFNDYAA). Residues 466–486 (TLSLLLIVLVETIAVCYVYGL) form a helical membrane-spanning segment. Topologically, residues 487-504 (RRFESDLKAMTGRAVSWY) are cytoplasmic. Residues 505-525 (WKVMWAGVSPLLIVSLFVFYL) form a helical membrane-spanning segment. The Extracellular portion of the chain corresponds to 526–554 (SDYILTGTLKYQAWDASQGQLVTKDYPAY). The chain crosses the membrane as a helical span at residues 555 to 575 (ALAVIGLLVASSTMCIPLAAL). Residues 576–592 (GTFVQRRLKRGDADPVA) lie on the Cytoplasmic side of the membrane.

It belongs to the sodium:neurotransmitter symporter (SNF) (TC 2.A.22) family. SLC6A20 subfamily. Kidney and small intestine. Expressed in the S3 segment of the proximal tubule. Expressed in neurons.

It is found in the apical cell membrane. It carries out the reaction L-proline(out) + chloride(out) + 2 Na(+)(out) = L-proline(in) + chloride(in) + 2 Na(+)(in). It catalyses the reaction L-pipecolate(out) + chloride(out) + 2 Na(+)(out) = L-pipecolate(in) + chloride(in) + 2 Na(+)(in). The enzyme catalyses sarcosine(out) + chloride(out) + 2 Na(+)(out) = sarcosine(in) + chloride(in) + 2 Na(+)(in). The catalysed reaction is N-methyl-L-proline(out) + chloride(out) + 2 Na(+)(out) = N-methyl-L-proline(in) + chloride(in) + 2 Na(+)(in). It carries out the reaction 2-methyl-2-(methylamino)propanoate(out) + chloride(out) + 2 Na(+)(out) = 2-methyl-2-(methylamino)propanoate(in) + chloride(in) + 2 Na(+)(in). It catalyses the reaction glycine betaine(out) + chloride(out) + 2 Na(+)(out) = glycine betaine(in) + chloride(in) + 2 Na(+)(in). The enzyme catalyses glycine(out) + chloride(out) + 2 Na(+)(out) = glycine(in) + chloride(in) + 2 Na(+)(in). In terms of biological role, mediates the Na(+)- and Cl(-)-dependent uptake of imino acids such as L-proline, N-methyl-L-proline and pipecolate as well as N-methylated amino acids. Also transports glycine, regulates proline and glycine homeostasis in the brain playing a role in the modulation of NMDAR currents. The sequence is that of Sodium- and chloride-dependent transporter XTRP3 from Homo sapiens (Human).